We begin with the raw amino-acid sequence, 51 residues long: MFRWAIIFAVIALLASLLGFGGVAGLSQNFAYIFLVVAVILFIIGFISRRT.

The next 2 membrane-spanning stretches (helical) occupy residues 6–26 (IIFA…VAGL) and 27–47 (SQNF…IGFI).

The protein belongs to the UPF0391 family.

The protein resides in the cell membrane. This is UPF0391 membrane protein PsycPRwf_2202 from Psychrobacter sp. (strain PRwf-1).